The following is a 446-amino-acid chain: Golgi reassembly-stacking protein 1 (446 aa).

The interval 1-20 (MGLGASSEQPAGGEGFHLHG) is disordered. Residue G2 is the site of N-myristoyl glycine attachment. PDZ GRASP-type domains are found at residues 14 to 104 (EGFH…FCSF) and 110 to 198 (HVWH…YGYL). The tract at residues 14-214 (EGFHLHGVQE…PSSQHKKPPG (201 aa)) is GRASP. Residues H17, H19, and C102 each contribute to the Zn(2+) site. The segment at 189 to 201 (LGCGIGYGYLHRI) is essential for interaction with GOLGA2/GM130. Disordered regions lie at residues 202-252 (PTQP…LGSR) and 343-446 (VSGP…EPGL). A phosphothreonine mark is found at T216, T220, and T224. Residues 343-354 (VSGPEDIGSSSS) show a composition bias toward low complexity. Phosphoserine is present on residues S365, S367, and S376.

The protein belongs to the GORASP family. Homodimer. Forms higher-order oligomers under interphase but not mitotic conditions. Dimers of the protein on one membrane might be able to interact with dimers on another and so stack cisternae. Interacts with the C-terminus of GOLGA2/GM130 under both mitotic and non-mitotic conditions. The interaction is critical for the correct targeting of both proteins to the cis-Golgi. Interacts with TMED2 and TMED3. Post-translationally, phosphorylated by CDC2/B1 and PLK kinases during mitosis. Phosphorylation cycle correlates with the cisternal stacking cycle. Phosphorylation of the homodimer prevents the association of dimers into higher-order oligomers, leading to cisternal unstacking. In terms of processing, target for caspase-3 cleavage during apoptosis. The cleavage contributes to Golgi fragmentation and occurs very early in the execution phase of apoptosis. Myristoylated.

Its subcellular location is the golgi apparatus. The protein resides in the cis-Golgi network membrane. Its function is as follows. Key structural protein of the Golgi apparatus. The membrane cisternae of the Golgi apparatus adhere to each other to form stacks, which are aligned side by side to form the Golgi ribbon. Acting in concert with GORASP2/GRASP55, is required for the formation and maintenance of the Golgi ribbon, and may be dispensable for the formation of stacks. However, other studies suggest that GORASP1 plays an important role in assembly and membrane stacking of the cisternae, and in the reassembly of Golgi stacks after breakdown during mitosis. Caspase-mediated cleavage of GORASP1 is required for fragmentation of the Golgi during apoptosis. Also mediates, via its interaction with GOLGA2/GM130, the docking of transport vesicles with the Golgi membranes. Mediates ER stress-induced unconventional (ER/Golgi-independent) trafficking of core-glycosylated CFTR to cell membrane. The polypeptide is Golgi reassembly-stacking protein 1 (Gorasp1) (Mus musculus (Mouse)).